A 97-amino-acid chain; its full sequence is Co-chaperonin GroES (97 aa).

It belongs to the GroES chaperonin family. As to quaternary structure, heptamer of 7 subunits arranged in a ring. Interacts with the chaperonin GroEL.

It localises to the cytoplasm. Together with the chaperonin GroEL, plays an essential role in assisting protein folding. The GroEL-GroES system forms a nano-cage that allows encapsulation of the non-native substrate proteins and provides a physical environment optimized to promote and accelerate protein folding. GroES binds to the apical surface of the GroEL ring, thereby capping the opening of the GroEL channel. This Pseudomonas aeruginosa (strain LESB58) protein is Co-chaperonin GroES.